The chain runs to 433 residues: GPI mannosyltransferase 2 (433 aa).

Position 1 (M1) is a topological domain, cytoplasmic. Residues 2–22 form a helical membrane-spanning segment; the sequence is IVGLTLYFVLFRSIQYLLVFL. Residues 23-109 are Lumenal-facing; the sequence is TPIRQFDTST…NNDSIYHALR (87 aa). N-linked (GlcNAc...) asparagine glycosylation is found at N69 and N101. Residues 110-130 traverse the membrane as a helical segment; it reads VGVAIENVLFYLSGIVLYFLT. Residues 131–161 lie on the Cytoplasmic side of the membrane; the sequence is KKIFSQNIRQSQFARTIAKKTSLLFFLTSAA. A helical transmembrane segment spans residues 162 to 182; sequence GFLTSIYSEPLSFFFAFVGIW. At 183–215 the chain is on the lumenal side; that stretch reads SRECSISVPVLGQFDISWRYWFPYSFISMACFT. The chain crosses the membrane as a helical span at residues 216-236; sequence LASLNRSNCVLLGIYFIFDLI. At 237 to 243 the chain is on the cytoplasmic side; the sequence is ELTKNRK. A helical transmembrane segment spans residues 244 to 264; sequence FVKAICFPLLSGSLMFSALLY. The Lumenal segment spans residues 265 to 318; sequence QQYYLPYKTFCPQRGEWCKSQLFSSIFITKTSLYSYIQSHYWGVGLLKYWTPNN. A helical transmembrane segment spans residues 319–339; it reads IPNFLFAVPNIIILIYSSIYF. At 340–350 the chain is on the cytoplasmic side; the sequence is SKIYPSYNLKA. A helical transmembrane segment spans residues 351 to 371; sequence LVWITRALVVIVCFFAHVQIL. At 372 to 409 the chain is on the lumenal side; sequence NRIASFLPLHLWYLADRLVKTSDPKKMENPKGDDKIVK. Residues 410-430 traverse the membrane as a helical segment; it reads FYIYWLAFWIPLQTILFAAFL. Residues 431-433 lie on the Cytoplasmic side of the membrane; the sequence is PPA.

Belongs to the PIGV family. Part of the GPI mannosyltransferase 2 complex composed of GPI18 and PGA1.

It is found in the endoplasmic reticulum membrane. Its pathway is glycolipid biosynthesis; glycosylphosphatidylinositol-anchor biosynthesis. Its function is as follows. Mannosyltransferase involved in glycosylphosphatidylinositol-anchor biosynthesis. Responsible for the transfer of the second mannose to the glycosylphosphatidylinositol during GPI precursor assembly. This Saccharomyces cerevisiae (strain ATCC 204508 / S288c) (Baker's yeast) protein is GPI mannosyltransferase 2 (GPI18).